Reading from the N-terminus, the 532-residue chain is Probable cytochrome P450 524A1 (532 aa).

A helical transmembrane segment spans residues 8-28; that stretch reads FIIFILLAALAVFVSEATSKV. C478 provides a ligand contact to heme.

It belongs to the cytochrome P450 family. The cofactor is heme.

Its subcellular location is the membrane. This Dictyostelium discoideum (Social amoeba) protein is Probable cytochrome P450 524A1 (cyp524A1).